The following is a 354-amino-acid chain: Protein RecA (354 aa).

67–74 (GPESSGKT) lines the ATP pocket.

The protein belongs to the RecA family.

It localises to the cytoplasm. Its function is as follows. Can catalyze the hydrolysis of ATP in the presence of single-stranded DNA, the ATP-dependent uptake of single-stranded DNA by duplex DNA, and the ATP-dependent hybridization of homologous single-stranded DNAs. It interacts with LexA causing its activation and leading to its autocatalytic cleavage. In Haemophilus influenzae (strain 86-028NP), this protein is Protein RecA.